The primary structure comprises 266 residues: tRNA pseudouridine synthase A (266 aa).

Asp-56 serves as the catalytic Nucleophile. Tyr-110 is a binding site for substrate.

Belongs to the tRNA pseudouridine synthase TruA family.

It carries out the reaction uridine(38/39/40) in tRNA = pseudouridine(38/39/40) in tRNA. In terms of biological role, formation of pseudouridine at positions 38, 39 and 40 in the anticodon stem and loop of transfer RNAs. This Halobacterium salinarum (strain ATCC 29341 / DSM 671 / R1) protein is tRNA pseudouridine synthase A.